The chain runs to 330 residues: MIISKQCSNCSFDVVATQFVQWLQSYRQQQQQSGNHHVVDIILQKIGCGGDIEFIDINLWWSQCRTIDEGDAPHSVVRGDSPYAYITNVSDNEISDHLLVTTSQYNASMFRKLFRHIEVVPHAYDPLEVSVVDKVKEKKFDVITIGYDTADDHKGLTVARKVALDLSLRYVEVSNQCDNVGVNASTSQTQIQLADNMICIPFMTLTREDVYRLIAQSRFYLALSHTEGFGLPVLESMVAGTVPIYVDGHAFHEYAKGIPIPAYSDKRVDWYNYEYEDVVEVVKSAMSTSQSEYNELSMRVKEESRHYFHPDVVYRKLINIVNKNVKSNLF.

The protein belongs to the glycosyltransferase group 1 family. Glycosyltransferase 4 subfamily.

This chain is Putative glycosyltransferase ORF330, found in Acidianus filamentous virus 2 (isolate Italy/Pozzuoli) (AFV-2).